Reading from the N-terminus, the 230-residue chain is Prepilin leader peptidase/N-methyltransferase (230 aa).

Transmembrane regions (helical) follow at residues 1–21 (MIYF…WFYL), 60–80 (GHIL…QIAF), 84–104 (IFTV…YLDW), 114–134 (CLWL…LLTL), 140–160 (SAAS…FYYG), 181–201 (LETL…FSLI), and 208–228 (FLPF…VKYY).

Belongs to the peptidase A24 family.

It localises to the cell inner membrane. It carries out the reaction Typically cleaves a -Gly-|-Phe- bond to release an N-terminal, basic peptide of 5-8 residues from type IV prepilin, and then N-methylates the new N-terminal amino group, the methyl donor being S-adenosyl-L-methionine.. In terms of biological role, plays a role in type II pseudopili formation by proteolytically removing the leader sequence from substrate proteins and subsequently monomethylating the alpha-amino group of the newly exposed N-terminal phenylalanine. Substrates include proteins required for biogenesis of the type II general secretory apparatus. This is Prepilin leader peptidase/N-methyltransferase (hofD) from Haemophilus influenzae (strain ATCC 51907 / DSM 11121 / KW20 / Rd).